The chain runs to 1252 residues: Immunoglobulin superfamily DCC subclass member 4 (1252 aa).

The signal sequence occupies residues 1–22 (MARADTGRGLLVLTFCLLSARG). Topologically, residues 23-956 (ELPLPQETTV…SDSLDVHAVT (934 aa)) are extracellular. 4 consecutive Ig-like domains span residues 27–136 (PQET…VAVV), 142–228 (EDFS…ASLT), 241–329 (QDVV…AELR), and 334–420 (PAIS…APLA). Cystine bridges form between cysteine 55–cysteine 120 and cysteine 163–cysteine 211. Asparagine 88 is a glycosylation site (N-linked (GlcNAc...) asparagine). A glycan (N-linked (GlcNAc...) asparagine) is linked at asparagine 251. 2 disulfide bridges follow: cysteine 264–cysteine 311 and cysteine 355–cysteine 404. 5 Fibronectin type-III domains span residues 430–524 (APTR…TLDD), 526–622 (PSAA…TPGV), 631–742 (APAE…TPDL), 751–844 (PPAH…TLPD), and 849–944 (PPSD…TLQK). Residues 669–688 (TEEEADGDRPPGGRGDQAWD) form a disordered region. The chain crosses the membrane as a helical span at residues 957-977 (GIIVGVCLGLLCLLACMCAGL). At 978-1252 (RRSSHREALP…RAPVSSAQVP (275 aa)) the chain is on the cytoplasmic side. Threonine 994 is subject to Phosphothreonine.

This sequence belongs to the immunoglobulin superfamily. DCC family. In terms of tissue distribution, expressed in skeletal muscle, heart and brain. Brain expression is hippocampus-specific.

It is found in the cell membrane. The sequence is that of Immunoglobulin superfamily DCC subclass member 4 (Igdcc4) from Mus musculus (Mouse).